A 520-amino-acid polypeptide reads, in one-letter code: MSTTAYPDTILIIDFGSQVTQLIARRVREANVYCEIVPFQSADEAFKRLQPKGVILSGSPHSTTDIGSPRAPQAIFDAGIPVLGICYGEQTMCAQLGGNVESGHDREFGRAFLDVQEDSPLFAGIWAKGTRHQVWMSHGDRVTSLPDGFTIIGTSPNAPYAVIADEKRKYYGVQFHPEVVHTPDGAKLLQNFVHRIVGVKPGWTMGAYREQAVEAIRKQVGSGKVICALSGGVDSSVAALLAHEAVGDQLTCILVDHGLMRKDEAQQVVEMFREHYNLPLILVDASDRFIGALEGESDPEKKRKTIGRLFIEVFEEEARKLGGADFLVQGTLYPDVIESVSFTGGPSVTIKSHHNVGGLPERMKMQLVEPLRELFKDEVRLLGKELGLPDSFIGRHPFPGPGLAIRCPGGVTREKLEILREADAIYLDEIRKAGLYDAIWQAFAVLLPVQTVGVMGDGRTYEFVCALRAVTSVDGMTADFYHYDMNFLGNAATRIINEVRGINRVVYDVTSKPPGTIEWE.

The 194-residue stretch at 9-202 folds into the Glutamine amidotransferase type-1 domain; it reads TILIIDFGSQ…VHRIVGVKPG (194 aa). Cys86 serves as the catalytic Nucleophile. Active-site residues include His176 and Glu178. The region spanning 203–395 is the GMPS ATP-PPase domain; the sequence is WTMGAYREQA…LGLPDSFIGR (193 aa). 230–236 lines the ATP pocket; the sequence is SGGVDSS.

In terms of assembly, homodimer.

The catalysed reaction is XMP + L-glutamine + ATP + H2O = GMP + L-glutamate + AMP + diphosphate + 2 H(+). The protein operates within purine metabolism; GMP biosynthesis; GMP from XMP (L-Gln route): step 1/1. Catalyzes the synthesis of GMP from XMP. In Brucella abortus (strain S19), this protein is GMP synthase [glutamine-hydrolyzing].